We begin with the raw amino-acid sequence, 238 residues long: 2-C-methyl-D-erythritol 4-phosphate cytidylyltransferase (238 aa).

Belongs to the IspD/TarI cytidylyltransferase family. IspD subfamily.

The catalysed reaction is 2-C-methyl-D-erythritol 4-phosphate + CTP + H(+) = 4-CDP-2-C-methyl-D-erythritol + diphosphate. It participates in isoprenoid biosynthesis; isopentenyl diphosphate biosynthesis via DXP pathway; isopentenyl diphosphate from 1-deoxy-D-xylulose 5-phosphate: step 2/6. Its function is as follows. Catalyzes the formation of 4-diphosphocytidyl-2-C-methyl-D-erythritol from CTP and 2-C-methyl-D-erythritol 4-phosphate (MEP). The polypeptide is 2-C-methyl-D-erythritol 4-phosphate cytidylyltransferase (Paraburkholderia phytofirmans (strain DSM 17436 / LMG 22146 / PsJN) (Burkholderia phytofirmans)).